A 310-amino-acid chain; its full sequence is Putative S-adenosyl-L-methionine-dependent methyltransferase Mb0151 (310 aa).

S-adenosyl-L-methionine is bound by residues Asp132 and 161 to 162; that span reads DL.

This sequence belongs to the UPF0677 family.

In terms of biological role, exhibits S-adenosyl-L-methionine-dependent methyltransferase activity. The polypeptide is Putative S-adenosyl-L-methionine-dependent methyltransferase Mb0151 (Mycobacterium bovis (strain ATCC BAA-935 / AF2122/97)).